The primary structure comprises 200 residues: NADH-quinone oxidoreductase subunit C (200 aa).

It belongs to the complex I 30 kDa subunit family. NDH-1 is composed of 14 different subunits. Subunits NuoB, C, D, E, F, and G constitute the peripheral sector of the complex.

Its subcellular location is the cell inner membrane. The catalysed reaction is a quinone + NADH + 5 H(+)(in) = a quinol + NAD(+) + 4 H(+)(out). Functionally, NDH-1 shuttles electrons from NADH, via FMN and iron-sulfur (Fe-S) centers, to quinones in the respiratory chain. The immediate electron acceptor for the enzyme in this species is believed to be ubiquinone. Couples the redox reaction to proton translocation (for every two electrons transferred, four hydrogen ions are translocated across the cytoplasmic membrane), and thus conserves the redox energy in a proton gradient. The protein is NADH-quinone oxidoreductase subunit C of Paraburkholderia xenovorans (strain LB400).